The chain runs to 350 residues: Cephaeline 6'-O-methyltransferase IpeOMT1 (350 aa).

G193, D216, D236, M237, and K250 together coordinate S-adenosyl-L-methionine. Residue H254 is the Proton acceptor of the active site.

It belongs to the class I-like SAM-binding methyltransferase superfamily. Cation-independent O-methyltransferase family. Expressed in roots.

It is found in the cytoplasm. The protein resides in the cytosol. The enzyme catalyses cephaeline + S-adenosyl-L-methionine = emetine + S-adenosyl-L-homocysteine + H(+). The catalysed reaction is deacetylisoipecoside + S-adenosyl-L-methionine = 6-O-methyldeacetylisoipecoside + S-adenosyl-L-homocysteine + H(+). It catalyses the reaction 7-O-methyldeacetylisoipecoside + S-adenosyl-L-methionine = 6,7-O,O-dimethyldeacetylisoipecoside + S-adenosyl-L-homocysteine + H(+). It carries out the reaction norcoclaurine + S-adenosyl-L-methionine = coclaurine + S-adenosyl-L-homocysteine + H(+). The enzyme catalyses (S)-norprotosinomenine + S-adenosyl-L-methionine = (S)-6-O-methylnorprotosinomenine + S-adenosyl-L-homocysteine + H(+). The catalysed reaction is (R)-norprotosinomenine + S-adenosyl-L-methionine = (R)-6-O-methylnorprotosinomenine + S-adenosyl-L-homocysteine + H(+). It functions in the pathway alkaloid biosynthesis. In terms of biological role, O-methyltransferase involved in the biosynthesis of ipecac and benzylisoquinoline monoterpenoid-isoquinoline alkaloids natural products, starting by the condensation of dopamine and secologanin, and including emetine and cephaeline, drugs used both as anti-protozoal (e.g. treatment of ameobiasis) and as emetic agents. Mediates cephaeline 6'-O-methylation to produce emetine. Catalyzes the 6-O-methylation of N-deacetylisoipecoside, 7-O-methyl-N-deacetylisoipecoside, isococlaurine, norcoclaurine, (S)-norprotosinomenine and (R)-norprotosinomenine, and, with a lower efficiency, of 4'-O-methyllaudanosoline, isoorientaline and protosinomenine. Supports also the 4'-O-methylation of nororientaline. This is Cephaeline 6'-O-methyltransferase IpeOMT1 from Carapichea ipecacuanha (Ipecac).